The sequence spans 222 residues: MGISRDSIHKRRATGGKQKQWRKKRKYEMGRQPANTKLSSNKTVRRIRVRGGNVKWRALRLDTGNYSWGSEATTRKTRVLDVVYNASNNELVRTKTLVKSAIVQVDAAPFKQWYLSHYGVELGRKKKSASSTKKDGEEGEEAAVAAPEEVKKSNHLLRKIASRQEGRSLDSHIEDQFASGRLLACISSRPGQCGRADGYILEGKELEFYMKKIQKKKGKGAA.

Disordered regions lie at residues 1–37 and 125–147; these read MGISRDSIHKRRATGGKQKQWRKKRKYEMGRQPANTK and KKKSASSTKKDGEEGEEAAVAAP. A compositionally biased stretch (basic residues) spans 8–26; that stretch reads IHKRRATGGKQKQWRKKRK.

Belongs to the eukaryotic ribosomal protein eS8 family.

The chain is Small ribosomal subunit protein eS8z (RPS8A) from Arabidopsis thaliana (Mouse-ear cress).